The chain runs to 500 residues: MSSANLSIKENGAMVVFGASGDLSKKKTFPALFSLFSEGRLPKDIRIVGYARSKIEHEDFLDRITQNIKIDEEDSQAKEKLEEFKKRCSYYRGSYDKPEDFEGLNSHLCEREGDRSTHNRIFYLALPPDVFVSVATNLKKKCVPEKGIARLVIEKPFGVDLKSAQELQSQLAPLFDEKEIYRIDHYLGKEMVQNLVHLRFCNPVISHLWDKNSISSVQITFKEPIGTEGRGGYFDSSTIVRDIVQNHLVQILTLLTMETPTTFSADDLRDEKVKVLRRTRLGDLKDIVLGQYVKSKDGKKPGYLDDETVPKGSRCPTYSAIPCFIDTERWRGVPFLLKAGKAMDIGKVEIRVQFKAAANGLFKDAYHNELVIRVQPDEAIYFKMNIKQPGLSEAPLLTDLDLTYSRRFKNMKLHEAYEALFLDAFAGDQSRFARIDELECAWSLVDPLLKYMEEEKPVPEPYEYGSDGPECLYSFLKKFGYIYDSPDYYDYPVMSVPSDH.

Residues 18–25 (GASGDLSK), R52, and K155 each bind NADP(+). Residues K155, 185–189 (HYLGK), E223, and D242 contribute to the D-glucose 6-phosphate site. H247 serves as the catalytic Proton acceptor. K338 contributes to the NADP(+) binding site. K341 lines the D-glucose 6-phosphate pocket. K347, R351, and R373 together coordinate NADP(+). Q375 contacts D-glucose 6-phosphate. Residues 381–383 (YFK), 401–403 (DLT), and Y483 contribute to the NADP(+) site.

The protein belongs to the glucose-6-phosphate dehydrogenase family.

Its subcellular location is the cytoplasm. The protein localises to the cytosol. It catalyses the reaction D-glucose 6-phosphate + NADP(+) = 6-phospho-D-glucono-1,5-lactone + NADPH + H(+). Its pathway is carbohydrate degradation; pentose phosphate pathway; D-ribulose 5-phosphate from D-glucose 6-phosphate (oxidative stage): step 1/3. In terms of biological role, catalyzes the rate-limiting step of the oxidative pentose-phosphate pathway, which represents a route for the dissimilation of carbohydrates besides glycolysis. The main function of this enzyme is to provide reducing power (NADPH) and pentose phosphates for fatty acid and nucleic acid synthesis. The polypeptide is Glucose-6-phosphate 1-dehydrogenase (Schizosaccharomyces pombe (strain 972 / ATCC 24843) (Fission yeast)).